The chain runs to 1091 residues: Voltage-dependent calcium channel subunit alpha-2/delta-1 (1091 aa).

Positions 1–24 (MAAGCLLALTLTLFQSWLIGPSSE) are cleaved as a signal peptide. Residues 25–1061 (EPFPSPVTIK…VLEDYTDCGG (1037 aa)) are Extracellular-facing. A glycan (N-linked (GlcNAc...) asparagine) is linked at Asn-92. Ser-119 is subject to Phosphoserine. N-linked (GlcNAc...) asparagine glycosylation is found at Asn-136 and Asn-184. Residues 252 to 429 (DMLILVDVSG…INTQEYLDVL (178 aa)) enclose the VWFA domain. The a divalent metal cation site is built by Asp-258, Ser-260, and Ser-262. The short motif at 258 to 262 (DVSGS) is the MIDAS-like motif element. Residues Asn-323 and Asn-347 are each glycosylated (N-linked (GlcNAc...) asparagine). Cys-403 and Cys-1047 are joined by a disulfide. The Cache domain maps to 445-536 (WTNVYLDALE…QPKNPKSQEP (92 aa)). Residues Asn-593, Asn-769, Asn-876, and Asn-973 are each glycosylated (N-linked (GlcNAc...) asparagine). Residues 1062-1082 (VSGLNPSLWSIFGLQFILLWL) form a helical membrane-spanning segment. Residues 1083-1091 (VSGSRHYLW) lie on the Cytoplasmic side of the membrane.

The protein belongs to the calcium channel subunit alpha-2/delta family. Dimer formed of alpha-2-1 and delta-1 chains; disulfide-linked. Voltage-dependent calcium channels are multisubunit complexes, consisting of alpha-1 (CACNA1), alpha-2 (CACNA2D), beta (CACNB) and delta (CACNA2D) subunits in a 1:1:1:1 ratio. In terms of processing, proteolytically processed into subunits alpha-2-1 and delta-1 that are disulfide-linked.

It localises to the membrane. The protein localises to the cell membrane. In terms of biological role, the alpha-2/delta subunit of voltage-dependent calcium channels regulates calcium current density and activation/inactivation kinetics of the calcium channel. Plays an important role in excitation-contraction coupling. The protein is Voltage-dependent calcium channel subunit alpha-2/delta-1 (Cacna2d1) of Rattus norvegicus (Rat).